The primary structure comprises 259 residues: ATP synthase subunit b 2 (259 aa).

A helical membrane pass occupies residues 5–27; that stretch reads WFTVSAQAINFLILVALLKRFLY.

This sequence belongs to the ATPase B chain family. In terms of assembly, F-type ATPases have 2 components, F(1) - the catalytic core - and F(0) - the membrane proton channel. F(1) has five subunits: alpha(3), beta(3), gamma(1), delta(1), epsilon(1). F(0) has three main subunits: a(1), b(2) and c(10-14). The alpha and beta chains form an alternating ring which encloses part of the gamma chain. F(1) is attached to F(0) by a central stalk formed by the gamma and epsilon chains, while a peripheral stalk is formed by the delta and b chains.

It localises to the cell inner membrane. Functionally, f(1)F(0) ATP synthase produces ATP from ADP in the presence of a proton or sodium gradient. F-type ATPases consist of two structural domains, F(1) containing the extramembraneous catalytic core and F(0) containing the membrane proton channel, linked together by a central stalk and a peripheral stalk. During catalysis, ATP synthesis in the catalytic domain of F(1) is coupled via a rotary mechanism of the central stalk subunits to proton translocation. In terms of biological role, component of the F(0) channel, it forms part of the peripheral stalk, linking F(1) to F(0). The sequence is that of ATP synthase subunit b 2 from Syntrophotalea carbinolica (strain DSM 2380 / NBRC 103641 / GraBd1) (Pelobacter carbinolicus).